Reading from the N-terminus, the 1381-residue chain is Hepatocyte growth factor receptor (1381 aa).

The signal sequence occupies residues 1 to 24 (MKAPAVLAPGILMLLFTLVQRSNG). Over 25-932 (ECKEALAKSE…VIVQPDQNFT (908 aa)) the chain is Extracellular. Residues 27–515 (KEALAKSEMN…TGKKITKIPL (489 aa)) enclose the Sema domain. Asparagine 45 carries N-linked (GlcNAc...) asparagine glycosylation. 4 disulfide bridges follow: cysteine 95/cysteine 101, cysteine 98/cysteine 160, cysteine 133/cysteine 141, and cysteine 172/cysteine 175. N-linked (GlcNAc...) asparagine glycosylation occurs at asparagine 106. An N-linked (GlcNAc...) asparagine glycan is attached at asparagine 149. Asparagine 202 carries an N-linked (GlcNAc...) asparagine glycan. Cystine bridges form between cysteine 298–cysteine 363 and cysteine 385–cysteine 397. N-linked (GlcNAc...) asparagine glycans are attached at residues asparagine 399 and asparagine 405. 4 disulfide bridges follow: cysteine 520–cysteine 538, cysteine 526–cysteine 561, cysteine 529–cysteine 545, and cysteine 541–cysteine 551. IPT/TIG domains are found at residues 563–655 (PAIY…FSYV), 657–739 (PIIT…FSYR), and 742–836 (PIVY…LIYV). An O-linked (Man) threonine glycan is attached at threonine 582. Residues asparagine 607 and asparagine 635 are each glycosylated (N-linked (GlcNAc...) asparagine). 2 O-linked (Man) threonine glycosylation sites follow: threonine 676 and threonine 761. N-linked (GlcNAc...) asparagine glycans are attached at residues asparagine 785, asparagine 879, and asparagine 930. Residues 933–955 (GLIAGVVSISIALLLLLGLFLWL) form a helical membrane-spanning segment. Over 956-1381 (KKRKQIKDLG…EDNADDEVDT (426 aa)) the chain is Cytoplasmic. Phosphoserine is present on serine 966. Residue threonine 977 is modified to Phosphothreonine. A phosphoserine mark is found at serine 990, serine 997, and serine 1000. Tyrosine 1003 is modified (phosphotyrosine). Positions 1078-1345 (VHFNEVIGRG…RISAIFSTFI (268 aa)) constitute a Protein kinase domain. Residues 1084-1092 (IGRGHFGCV) and lysine 1110 contribute to the ATP site. Aspartate 1204 serves as the catalytic Proton acceptor. Residues 1212–1381 (LDEKFTVKVA…EDNADDEVDT (170 aa)) form an interaction with RANBP9 region. Position 1230 is a phosphotyrosine (tyrosine 1230). Residues tyrosine 1234 and tyrosine 1235 each carry the phosphotyrosine; by autocatalysis modification. At threonine 1289 the chain carries Phosphothreonine. The tract at residues 1320-1359 (WHPKAEMRPSFSELVSRISAIFSTFIGEHYVHVNATYVNV) is interaction with MUC20. Phosphotyrosine; by autocatalysis occurs at positions 1349 and 1356. Position 1365 is a phosphotyrosine (tyrosine 1365).

Belongs to the protein kinase superfamily. Tyr protein kinase family. As to quaternary structure, heterodimer made of an alpha chain (50 kDa) and a beta chain (145 kDa) which are disulfide linked. Binds PLXNB1. Interacts when phosphorylated with downstream effectors including STAT3, PIK3R1, SRC, PCLG1, GRB2 and GAB1. Interacts with SPSB1, SPSB2 and SPSB4. Interacts with INPP5D/SHIP1. When phosphorylated at Tyr-1356, interacts with INPPL1/SHIP2. Interacts with RANBP9 and RANBP10, as well as SPSB1, SPSB2, SPSB3 and SPSB4. SPSB1 binding occurs in the presence and in the absence of HGF, however HGF treatment has a positive effect on this interaction. Interacts with MUC20; prevents interaction with GRB2 and suppresses hepatocyte growth factor-induced cell proliferation. Interacts with GRB10. Interacts with PTPN1 and PTPN2. Interacts with HSP90AA1 and HSP90AB1; the interaction suppresses MET kinase activity. Interacts with tensin TNS3. Interacts (when phosphorylated) with tensin TNS4 (via SH2 domain); the interaction increases MET protein stability by inhibiting MET endocytosis and subsequent lysosomal degradation. (Microbial infection) Immunoprecipitates with L.monocytogenes InlB. InlB probably dimerizes upon binding to MET, which encourages subsequent dimerization of MET. In terms of processing, autophosphorylated in response to ligand binding on Tyr-1234 and Tyr-1235 in the kinase domain leading to further phosphorylation of Tyr-1349 and Tyr-1356 in the C-terminal multifunctional docking site. Dephosphorylated by PTPRJ at Tyr-1349 and Tyr-1365. Dephosphorylated by PTPN1 and PTPN2. Post-translationally, ubiquitinated. Ubiquitination by CBL regulates the receptor stability and activity through proteasomal degradation. O-mannosylation of IPT/TIG domains by TMEM260 is required for protein maturation. O-mannosylated residues are composed of single mannose glycans that are not elongated or modified. In terms of processing, (Microbial infection) Tyrosine phosphorylation is stimulated by L.monocytogenes InlB.

It localises to the membrane. The catalysed reaction is L-tyrosyl-[protein] + ATP = O-phospho-L-tyrosyl-[protein] + ADP + H(+). In its inactive state, the C-terminal tail interacts with the catalytic domain and inhibits the kinase activity. Upon ligand binding, the C-terminal tail is displaced and becomes phosphorylated, thus increasing the kinase activity. In terms of biological role, receptor tyrosine kinase that transduces signals from the extracellular matrix into the cytoplasm by binding to hepatocyte growth factor/HGF ligand. Regulates many physiological processes including proliferation, scattering, morphogenesis and survival. Ligand binding at the cell surface induces autophosphorylation of MET on its intracellular domain that provides docking sites for downstream signaling molecules. Following activation by ligand, interacts with the PI3-kinase subunit PIK3R1, PLCG1, SRC, GRB2, STAT3 or the adapter GAB1. Recruitment of these downstream effectors by MET leads to the activation of several signaling cascades including the RAS-ERK, PI3 kinase-AKT, or PLCgamma-PKC. The RAS-ERK activation is associated with the morphogenetic effects while PI3K/AKT coordinates prosurvival effects. During embryonic development, MET signaling plays a role in gastrulation, development and migration of muscles and neuronal precursors, angiogenesis and kidney formation. In adults, participates in wound healing as well as organ regeneration and tissue remodeling. Also promotes differentiation and proliferation of hematopoietic cells. (Microbial infection) Acts as a receptor for Listeria monocytogenes internalin InlB, mediating entry of the pathogen into cells. The polypeptide is Hepatocyte growth factor receptor (MET) (Chlorocebus aethiops (Green monkey)).